Consider the following 290-residue polypeptide: 2-hydroxy-6-oxo-6-(2'-aminophenyl)hexa-2,4-dienoic acid hydrolase (290 aa).

Active-site residues include Ser114, Asp233, and His261.

It belongs to the DmpD/TodF/XylF esterase family. In terms of assembly, homodimer.

The enzyme catalyses (2E,4E)-6-(2-aminophenyl)-2-hydroxy-6-oxohexa-2,4-dienoate + H2O = (2E)-2-hydroxypenta-2,4-dienoate + anthranilate + H(+). Its pathway is xenobiotic degradation; carbazole degradation. Functionally, involved in the degradation of carbazole, a toxic N-heterocyclic aromatic compound containing dibenzopyrrole system. Catalyzes the hydrolytic cleavage of a carbon-carbon bond of 2-hydroxy-6-oxo-6-(2'-aminophenyl)hexa-2,4-dienoic acid (HOPDA) to yield anthranilate. CarC is specific for 2-hydroxy-6-oxo-6-phenylhexa-2,4-dienoic acid (6-phenyl-HODA), and has little activity toward 2-hydroxy-6-oxohepta-2,4-dienoic acid and 2-hydroxymuconic semialdehyde. The effect of the presence of an amino group or hydroxyl group at the 2'-position of phenyl moiety of 6-phenyl-HODA on the enzyme activity is found to be small. This is 2-hydroxy-6-oxo-6-(2'-aminophenyl)hexa-2,4-dienoic acid hydrolase (carC) from Metapseudomonas resinovorans (Pseudomonas resinovorans).